The following is a 293-amino-acid chain: Elongation factor Ts (293 aa).

The tract at residues 80 to 83 (TDFV) is involved in Mg(2+) ion dislocation from EF-Tu.

The protein belongs to the EF-Ts family.

Its subcellular location is the cytoplasm. Associates with the EF-Tu.GDP complex and induces the exchange of GDP to GTP. It remains bound to the aminoacyl-tRNA.EF-Tu.GTP complex up to the GTP hydrolysis stage on the ribosome. The chain is Elongation factor Ts from Burkholderia cenocepacia (strain HI2424).